A 142-amino-acid polypeptide reads, in one-letter code: Immunoglobulin omega chain (142 aa).

An N-terminal signal peptide occupies residues 1–19 (MAWTSVLLMLLAHLTGCGP). Residues 20-41 (QPMVHQPPSASSSLGATIRLSC) are framework-1. Cysteine 41 and cysteine 115 form a disulfide bridge. The tract at residues 42–56 (TLSNDHNIGIYSIYW) is complementarity-determining-1. Residues 57 to 70 (YQQRPGHPPRFLLR) are framework-2. The complementarity-determining-2 stretch occupies residues 71-81 (YFSHSDKHQGP). The interval 82 to 115 (DIPPRFSGSKDTARNLGYLSISELQPEDEAVYYC) is framework-3.

This sequence belongs to the immunoglobulin superfamily. Only expressed by pre-B-cells.

Functionally, associates with the Ig-mu chain to form a molecular complex that is expressed on the surface of pre-B-cells. This complex presumably regulates Ig gene rearrangements in the early steps of B-cell differentiation. The sequence is that of Immunoglobulin omega chain from Mus musculus (Mouse).